A 152-amino-acid polypeptide reads, in one-letter code: Transcriptional regulator MraZ (152 aa).

SpoVT-AbrB domains are found at residues 5–52 and 81–124; these read ATLV…PLPE and ASEC…DETT.

This sequence belongs to the MraZ family. As to quaternary structure, forms oligomers.

Its subcellular location is the cytoplasm. It localises to the nucleoid. Negatively regulates its own expression and that of the subsequent genes in the proximal part of the division and cell wall (dcw) gene cluster. Acts by binding directly to DNA. May also regulate the expression of genes outside the dcw cluster. The chain is Transcriptional regulator MraZ from Escherichia coli O45:K1 (strain S88 / ExPEC).